A 147-amino-acid chain; its full sequence is Hemoglobin subunit epsilon (147 aa).

In terms of domain architecture, Globin spans 3–147 (HFTAEEKATI…VATALAHKYH (145 aa)). A phosphoserine mark is found at serine 14 and serine 51. Heme b is bound by residues histidine 64 and histidine 93.

The protein belongs to the globin family. In terms of assembly, heterotetramer of two alpha chains and two epsilon chains in early embryonic hemoglobin Gower-2; two zeta chains and two epsilon chains in early embryonic hemoglobin Gower-1. Red blood cells.

Functionally, the epsilon chain is a beta-type chain of early mammalian embryonic hemoglobin. This is Hemoglobin subunit epsilon (HBE1) from Daubentonia madagascariensis (Aye-aye).